A 333-amino-acid chain; its full sequence is T-cell surface glycoprotein CD1b (333 aa).

The signal sequence occupies residues 1 to 18; the sequence is MLLLPFQLLAVLFPGGNS. The Extracellular portion of the chain corresponds to 19 to 303; it reads EHAFQGPTSF…YWSNPTSIGS (285 aa). 3 N-linked (GlcNAc...) asparagine glycosylation sites follow: Asn-38, Asn-75, and Asn-146. Cystine bridges form between Cys-120–Cys-184, Cys-149–Cys-163, and Cys-224–Cys-279. In terms of domain architecture, Ig-like spans 185-295; sequence PRYLLGVLNA…LEGQDIILYW (111 aa). The N-linked (GlcNAc...) asparagine glycan is linked to Asn-258. The helical transmembrane segment at 304-324 threads the bilayer; the sequence is IVLAIIVPSLLLLLCLALWYM. The Cytoplasmic segment spans residues 325 to 333; the sequence is RRRSYQNIP. An Internalization signal motif is present at residues 329–332; it reads YQNI.

Heterodimer with B2M (beta-2-microglobulin). Interacts with saposin C. As to expression, expressed in lymphocytes, spleen, lung, liver, kidney and heart.

The protein localises to the cell membrane. The protein resides in the endosome membrane. It localises to the lysosome membrane. Functionally, antigen-presenting protein that binds self and non-self lipid and glycolipid antigens and presents them to T-cell receptors on natural killer T-cells. The protein is T-cell surface glycoprotein CD1b (CD1B) of Aotus nancymaae (Ma's night monkey).